The sequence spans 232 residues: Ribonuclease 3 (232 aa).

An RNase III domain is found at 2-135 (IKALEDDLSQ…FIGALYLDQG (134 aa)). Glu-48 lines the Mg(2+) pocket. Asp-52 is a catalytic residue. Asp-121 and Glu-124 together coordinate Mg(2+). Residue Glu-124 is part of the active site. The DRBM domain occupies 161 to 230 (DHKSELQELL…ANQALQLLRR (70 aa)).

Belongs to the ribonuclease III family. As to quaternary structure, homodimer. Mg(2+) serves as cofactor.

It is found in the cytoplasm. The catalysed reaction is Endonucleolytic cleavage to 5'-phosphomonoester.. Its function is as follows. Digests double-stranded RNA. Involved in the processing of primary rRNA transcript to yield the immediate precursors to the large and small rRNAs (23S and 16S). Processes some mRNAs, and tRNAs when they are encoded in the rRNA operon. Processes pre-crRNA and tracrRNA of type II CRISPR loci if present in the organism. The protein is Ribonuclease 3 of Pediococcus pentosaceus (strain ATCC 25745 / CCUG 21536 / LMG 10740 / 183-1w).